Consider the following 256-residue polypeptide: Adenylate kinase (256 aa).

Position 45–50 (45–50 (GAGKGT)) interacts with ATP. Residues 67 to 96 (ATGDLLRQQVAMGTDLGKQAKKIMDQGALV) are NMP. Residues Thr68, Arg73, 94–96 (ALV), 123–126 (GFPR), and Gln130 contribute to the AMP site. Residues 164 to 201 (GRLIHPGSGRSYHKIFSPPKQPMKDDITGEPLVQRSDD) form an LID region. ATP contacts are provided by residues Arg165 and 174-175 (SY). AMP contacts are provided by Arg198 and Arg209. Residue Gln237 coordinates ATP.

Belongs to the adenylate kinase family. AK2 subfamily. Monomer.

The protein localises to the cytoplasm. It localises to the cytosol. The protein resides in the mitochondrion intermembrane space. It catalyses the reaction AMP + ATP = 2 ADP. Functionally, catalyzes the reversible transfer of the terminal phosphate group between ATP and AMP. Plays an important role in cellular energy homeostasis and in adenine nucleotide metabolism. Adenylate kinase activity is critical for regulation of the phosphate utilization and the AMP de novo biosynthesis pathways. The sequence is that of Adenylate kinase from Malassezia globosa (strain ATCC MYA-4612 / CBS 7966) (Dandruff-associated fungus).